A 105-amino-acid polypeptide reads, in one-letter code: uncharacterized protein (105 aa).

Disordered stretches follow at residues 29 to 55 and 72 to 105; these read HTRVGVTDPDPRVPPLLPGPAGVTDES and EQRGDRRAVRCEPAGEPPLDDVRTPAAPAVRSGR. Basic and acidic residues predominate over residues 72–81; it reads EQRGDRRAVR.

This is an uncharacterized protein from Streptomyces coelicolor (strain ATCC BAA-471 / A3(2) / M145).